Reading from the N-terminus, the 239-residue chain is LexA repressor (239 aa).

Residues 26–46 (FDEMKDALDLASKSGIHRLIT) constitute a DNA-binding region (H-T-H motif). Residues Ser159 and Lys197 each act as for autocatalytic cleavage activity in the active site.

This sequence belongs to the peptidase S24 family. As to quaternary structure, homodimer.

The catalysed reaction is Hydrolysis of Ala-|-Gly bond in repressor LexA.. In terms of biological role, represses a number of genes involved in the response to DNA damage (SOS response), including recA and lexA. In the presence of single-stranded DNA, RecA interacts with LexA causing an autocatalytic cleavage which disrupts the DNA-binding part of LexA, leading to derepression of the SOS regulon and eventually DNA repair. This chain is LexA repressor, found in Allorhizobium ampelinum (strain ATCC BAA-846 / DSM 112012 / S4) (Agrobacterium vitis (strain S4)).